A 294-amino-acid chain; its full sequence is NADH-cytochrome b5 reductase 1 (294 aa).

Residues Pro18–Leu38 traverse the membrane as a helical segment. The 104-residue stretch at Asp51–Thr154 folds into the FAD-binding FR-type domain. Residues Ala134–Gly149 and Ser160–Leu192 contribute to the FAD site.

The protein belongs to the flavoprotein pyridine nucleotide cytochrome reductase family. Monomer. Component of the 2-(3-amino-3-carboxypropyl)histidine synthase complex composed of DPH1, DPH2, DPH3 and a NADH-dependent reductase, predominantly CBR1. Requires FAD as cofactor.

It is found in the mitochondrion outer membrane. The catalysed reaction is 2 Fe(III)-[cytochrome b5] + NADH = 2 Fe(II)-[cytochrome b5] + NAD(+) + H(+). It catalyses the reaction 2 Fe(3+)-[Dph3] + NADH = 2 Fe(2+)-[Dph3] + NAD(+) + H(+). It functions in the pathway protein modification; peptidyl-diphthamide biosynthesis. In terms of biological role, NADH-dependent reductase for DPH3 and cytochrome b5. Required for the first step of diphthamide biosynthesis, a post-translational modification of histidine which occurs in elongation factor 2. DPH1 and DPH2 transfer a 3-amino-3-carboxypropyl (ACP) group from S-adenosyl-L-methionine (SAM) to a histidine residue, the reaction is assisted by a reduction system comprising DPH3 and a NADH-dependent reductase, predominantly CBR1. By reducing DPH3, also involved in the formation of the tRNA wobble base modification mcm5s 2U (5-methoxycarbonylmethyl-2-thiouridine), mediated by the elongator complex. The cytochrome b5/NADH cytochrome b5 reductase electron transfer system supports the catalytic activity of several sterol biosynthetic enzymes. The sequence is that of NADH-cytochrome b5 reductase 1 (CBR1) from Candida albicans (strain SC5314 / ATCC MYA-2876) (Yeast).